Here is a 256-residue protein sequence, read N- to C-terminus: MALAKRIIPCLDVDNGRVVKGVKFENIRDAGDPVEIARRYNEQGADEITFLDITASVDGRDTTLHTVERMASQVFIPLTVGGGVRTVQDIRNLLNAGADKVSINTAAVFNPEFVGEAADRFGSQCIVVAIDAKKVSGPGEAPRWEIFTHGGRKPTGLDAVEWAKKMEGLGAGEILLTSMDQDGMKNGFDLGVTRAISDALGIPVIASGGVGNLQHLADGILEGHASAVLAASIFHFGEYTVPEAKAYMASRGIVVR.

Active-site residues include Asp12 and Asp131.

It belongs to the HisA/HisF family. Heterodimer of HisH and HisF.

The protein resides in the cytoplasm. It catalyses the reaction 5-[(5-phospho-1-deoxy-D-ribulos-1-ylimino)methylamino]-1-(5-phospho-beta-D-ribosyl)imidazole-4-carboxamide + L-glutamine = D-erythro-1-(imidazol-4-yl)glycerol 3-phosphate + 5-amino-1-(5-phospho-beta-D-ribosyl)imidazole-4-carboxamide + L-glutamate + H(+). It functions in the pathway amino-acid biosynthesis; L-histidine biosynthesis; L-histidine from 5-phospho-alpha-D-ribose 1-diphosphate: step 5/9. IGPS catalyzes the conversion of PRFAR and glutamine to IGP, AICAR and glutamate. The HisF subunit catalyzes the cyclization activity that produces IGP and AICAR from PRFAR using the ammonia provided by the HisH subunit. This Pseudomonas entomophila (strain L48) protein is Imidazole glycerol phosphate synthase subunit HisF.